A 361-amino-acid polypeptide reads, in one-letter code: Chorismate synthase (361 aa).

The NADP(+) site is built by R48 and R54. FMN contacts are provided by residues 125–127 (RSS), 238–239 (NA), G278, 293–297 (KPTSS), and R319.

It belongs to the chorismate synthase family. In terms of assembly, homotetramer. FMNH2 is required as a cofactor.

It catalyses the reaction 5-O-(1-carboxyvinyl)-3-phosphoshikimate = chorismate + phosphate. It participates in metabolic intermediate biosynthesis; chorismate biosynthesis; chorismate from D-erythrose 4-phosphate and phosphoenolpyruvate: step 7/7. In terms of biological role, catalyzes the anti-1,4-elimination of the C-3 phosphate and the C-6 proR hydrogen from 5-enolpyruvylshikimate-3-phosphate (EPSP) to yield chorismate, which is the branch point compound that serves as the starting substrate for the three terminal pathways of aromatic amino acid biosynthesis. This reaction introduces a second double bond into the aromatic ring system. This chain is Chorismate synthase, found in Vibrio vulnificus (strain YJ016).